A 435-amino-acid polypeptide reads, in one-letter code: Serine--tRNA ligase (435 aa).

An L-serine-binding site is contributed by 242 to 244; the sequence is TAE. 273-275 provides a ligand contact to ATP; the sequence is RSE. Glu296 contacts L-serine. 360–363 is a binding site for ATP; the sequence is EISS. Ser396 lines the L-serine pocket.

The protein belongs to the class-II aminoacyl-tRNA synthetase family. Type-1 seryl-tRNA synthetase subfamily. As to quaternary structure, homodimer. The tRNA molecule binds across the dimer.

Its subcellular location is the cytoplasm. It catalyses the reaction tRNA(Ser) + L-serine + ATP = L-seryl-tRNA(Ser) + AMP + diphosphate + H(+). The catalysed reaction is tRNA(Sec) + L-serine + ATP = L-seryl-tRNA(Sec) + AMP + diphosphate + H(+). It functions in the pathway aminoacyl-tRNA biosynthesis; selenocysteinyl-tRNA(Sec) biosynthesis; L-seryl-tRNA(Sec) from L-serine and tRNA(Sec): step 1/1. Catalyzes the attachment of serine to tRNA(Ser). Is also able to aminoacylate tRNA(Sec) with serine, to form the misacylated tRNA L-seryl-tRNA(Sec), which will be further converted into selenocysteinyl-tRNA(Sec). This chain is Serine--tRNA ligase, found in Aliivibrio salmonicida (strain LFI1238) (Vibrio salmonicida (strain LFI1238)).